Consider the following 940-residue polypeptide: Beta-mannosidase A (940 aa).

The first 21 residues, 1–21 (MHFHGIATQAVLASNITTGSG), serve as a signal peptide directing secretion. 7 N-linked (GlcNAc...) asparagine glycosylation sites follow: Asn15, Asn39, Asn79, Asn245, Asn314, Asn321, and Asn344. The active-site Proton donor is Glu476. Residues Asn534, Asn605, Asn626, Asn653, Asn733, Asn761, and Asn785 are each glycosylated (N-linked (GlcNAc...) asparagine).

It belongs to the glycosyl hydrolase 2 family. Beta-mannosidase A subfamily. As to quaternary structure, homodimer.

Its subcellular location is the secreted. It catalyses the reaction Hydrolysis of terminal, non-reducing beta-D-mannose residues in beta-D-mannosides.. The protein operates within glycan metabolism; N-glycan degradation. Functionally, exoglycosidase that cleaves the single beta-linked mannose residue from the non-reducing end of beta-mannosidic oligosaccharides of various complexity and length. Involved in the degradation of polymeric mannan and galactomannan. This Emericella nidulans (strain FGSC A4 / ATCC 38163 / CBS 112.46 / NRRL 194 / M139) (Aspergillus nidulans) protein is Beta-mannosidase A (mndA).